A 175-amino-acid polypeptide reads, in one-letter code: Mating-type protein ALPHA1 (175 aa).

A DNA-binding region (alpha box) is located at residues 88-144 (SSKKYLNSFMAFRAYYSQFGSGVKQNVLSSLLAEEWHADKMQHGIWDYFAQQYNFIN).

It belongs to the MATALPHA1 family. In terms of assembly, binds DNA with a high specificity in complex with an MCM1 dimer. Interacts with STE12.

It localises to the nucleus. Its function is as follows. Mating type proteins are sequence specific DNA-binding proteins that act as master switches in yeast differentiation by controlling gene expression in a cell type-specific fashion. Transcriptional coactivator that, in alpha-cells, binds cooperatively with MCM1 and STE12 to a DNA sequence termed the QP' element, to activate the transcription of alpha-specific genes. The protein is Mating-type protein ALPHA1 (MATALPHA1) of Saccharomyces cerevisiae (strain ATCC 204508 / S288c) (Baker's yeast).